The chain runs to 657 residues: MKQMSYVTRWLYSTSHKDIGMTYLGFGMLSAMMGTGMSVMMRMELSNGNSQFFHGNNQAFNVMMSGHALLMMFFFIMPVWMGAFGNFFLPMLMGAADMAFARLNNISFWCLPPALVCMVCSVLMEQGAGTGFTTYPPLSSMSAHSGPSVDLAMFAMHLTSMSSLLGAMNFMVTVLNMRTMGLHMVNMPLFAWAMFLTAMLLLLSLPVLTAAVTLLLMDRNFNTGFYEVGAGGDPVTYEHLFWFFGQWWPTNYVNNLEYCAMCWETYNKMYFIMLLITMYMSTNLLANMVKMLMTNRSNQQVTKNRMNKPHALRGDTSPKVRHKMFMNTMSKKSHALRRDTSLFSFPKNDKVRHMYDMNSKRYKSYLMGTSETTSTKSLKEMNMPSQRTGNPAITGTNLKENKNTMENSFNQWLAGLMDGDGCFGITQNKYTNCEMTVALEDEKTLRIIQNKFGGSMKLRSGAKAIRYRLHNQKGMINTMNAINGNMRHSKRLVQLHKVCSLLNMPVLEPMILTKNNSWLTGFFDADGTMNFSFKSSCHSAGGYTSKGKVSNHPQLTISVTNKYLQDVLPFKEMLGGNIYFDKSQNGYYKWSMQSKKDILNFVDYIKLNPSKTVKLNRMLLCNLYYDLKDLKSYMLNDNNMLQNKAWIKFENKWNKKF.

Positions 1–245 are COX1 exons 1 to 2 encoded; sequence MKQMSYVTRW…TYEHLFWFFG (245 aa). 6 consecutive transmembrane segments (helical) span residues 19-39, 69-89, 103-123, 152-172, 188-208, and 269-289; these read IGMT…GMSV, LLMM…NFFL, LNNI…CSVL, AMFA…NFMV, PLFA…LPVL, and MYFI…ANMV. Residues 246–657 form a COX1 intron 2 encoded region; it reads QWWPTNYVNN…KFENKWNKKF (412 aa).

It in the C-terminal section; belongs to the LAGLIDADG endonuclease family. This sequence in the N-terminal section; belongs to the heme-copper respiratory oxidase family. The mature protein may arise from proteolytic cleavage of an in-frame translation of COX1 exons 1 and 2 plus intron 2, containing the aI2 open reading frame.

The protein localises to the mitochondrion. It is found in the membrane. Mitochondrial DNA endonuclease involved in intron homing. The chain is Probable intron-encoded endonuclease aI2 (aI2) from Debaryomyces hansenii (strain ATCC 36239 / CBS 767 / BCRC 21394 / JCM 1990 / NBRC 0083 / IGC 2968) (Yeast).